Reading from the N-terminus, the 388-residue chain is Leucine aminopeptidase 1 (388 aa).

The N-terminal stretch at 1–19 is a signal peptide; the sequence is MKSLSLLALAAIAPPAAVA. The propeptide occupies 20–88; sequence AVVDHQVPFE…SVKSHERIQV (69 aa). Asn180 carries an N-linked (GlcNAc...) asparagine glycan. Positions 188, 207, 246, and 273 each coordinate Zn(2+). Residues Cys322 and Cys326 are joined by a disulfide bond. Residue His355 coordinates Zn(2+).

Belongs to the peptidase M28 family. M28E subfamily. In terms of assembly, monomer. Zn(2+) serves as cofactor.

The protein localises to the secreted. Its function is as follows. Extracellular aminopeptidase that allows assimilation of proteinaceous substrates. The polypeptide is Leucine aminopeptidase 1 (LAP1) (Coccidioides posadasii (strain RMSCC 757 / Silveira) (Valley fever fungus)).